The primary structure comprises 628 residues: tRNA uridine 5-carboxymethylaminomethyl modification enzyme MnmG (628 aa).

13–18 (GAGHAG) contacts FAD. An NAD(+)-binding site is contributed by 273-287 (GPRYCPSIEDKIVRF).

It belongs to the MnmG family. Homodimer. Heterotetramer of two MnmE and two MnmG subunits. It depends on FAD as a cofactor.

It is found in the cytoplasm. Its function is as follows. NAD-binding protein involved in the addition of a carboxymethylaminomethyl (cmnm) group at the wobble position (U34) of certain tRNAs, forming tRNA-cmnm(5)s(2)U34. The protein is tRNA uridine 5-carboxymethylaminomethyl modification enzyme MnmG of Buchnera aphidicola subsp. Acyrthosiphon pisum (strain Tuc7).